The chain runs to 103 residues: Histone H4 (103 aa).

Gly residues predominate over residues 1–14; sequence MSGRGKGGKGLGKG. The disordered stretch occupies residues 1–20; the sequence is MSGRGKGGKGLGKGGAKRHR. Ser2 carries the N-acetylserine modification. Residues Lys6 and Lys13 each carry the N6-acetyl-N6-methyllysine; alternate modification. Lys17 is modified (N6-acetyllysine). The DNA-binding element occupies 17 to 21; that stretch reads KRHRK. Lys21 bears the N6-methyllysine mark.

The protein belongs to the histone H4 family. In terms of assembly, the nucleosome is a histone octamer containing two molecules each of H2A, H2B, H3 and H4 assembled in one H3-H4 heterotetramer and two H2A-H2B heterodimers. The octamer wraps approximately 147 bp of DNA.

Its subcellular location is the nucleus. It is found in the chromosome. In terms of biological role, core component of nucleosome. Nucleosomes wrap and compact DNA into chromatin, limiting DNA accessibility to the cellular machineries which require DNA as a template. Histones thereby play a central role in transcription regulation, DNA repair, DNA replication and chromosomal stability. DNA accessibility is regulated via a complex set of post-translational modifications of histones, also called histone code, and nucleosome remodeling. This is Histone H4 from Holothuria tubulosa (Tubular sea cucumber).